An 80-amino-acid polypeptide reads, in one-letter code: Teretoxin Tan6.1 (80 aa).

The first 21 residues, 1–21 (MATSGRLLCLCLVLGLVFESL), serve as a signal peptide directing secretion. Residues 22-34 (GHPGARLPKDGKR) constitute a propeptide that is removed on maturation.

Belongs to the teretoxin M (TM) superfamily. In terms of processing, contains 3 disulfide bonds. As to expression, expressed by the venom duct.

Its subcellular location is the secreted. This Terebra anilis (Auger snail) protein is Teretoxin Tan6.1.